We begin with the raw amino-acid sequence, 803 residues long: Xylosyltransferase sqv-6 (803 aa).

Over 3-13 (VVGGVNTNYRH) the chain is Cytoplasmic. A helical; Signal-anchor for type II membrane protein membrane pass occupies residues 14–34 (YALVIVLFFFLNVYLLYSAQN). The Lumenal segment spans residues 35-803 (SVQIRKDEGE…GWDEEARILR (769 aa)). The cysteines at positions 63 and 91 are disulfide-linked. Asparagine 95, asparagine 175, and asparagine 224 each carry an N-linked (GlcNAc...) asparagine glycan. 3 disulfide bridges follow: cysteine 107/cysteine 446, cysteine 465/cysteine 479, and cysteine 467/cysteine 477. Residues 115–209 (IDQRIGCFLD…FNAVEIFRTD (95 aa)) form the WSC domain. UDP-alpha-D-xylose is bound by residues aspartate 265 and 294–296 (TIW). Asparagine 326 carries N-linked (GlcNAc...) asparagine glycosylation. 399-400 (DW) contributes to the UDP-alpha-D-xylose binding site. UDP-alpha-D-xylose contacts are provided by residues serine 480 and 506–507 (RK). Residues asparagine 615 and asparagine 718 are each glycosylated (N-linked (GlcNAc...) asparagine). An intrachain disulfide couples cysteine 769 to cysteine 775.

The protein belongs to the glycosyltransferase 14 family. XylT subfamily. Requires a divalent metal cation as cofactor.

It localises to the endoplasmic reticulum membrane. Its subcellular location is the golgi apparatus membrane. The catalysed reaction is UDP-alpha-D-xylose + L-seryl-[protein] = 3-O-(beta-D-xylosyl)-L-seryl-[protein] + UDP + H(+). The protein operates within glycan metabolism; chondroitin sulfate biosynthesis. It functions in the pathway glycan metabolism; heparan sulfate biosynthesis. In terms of biological role, catalyzes the first step in biosynthesis of glycosaminoglycan. Transfers D-xylose from UDP-D-xylose to specific serine residues of the core protein. The sequence is that of Xylosyltransferase sqv-6 from Caenorhabditis briggsae.